The primary structure comprises 397 residues: Phosphoglycerate kinase (397 aa).

Substrate is bound by residues 23-25, arginine 38, 61-64, arginine 119, and arginine 152; these read DLN and HLGR. ATP contacts are provided by residues lysine 202, glutamate 324, and 354 to 357; that span reads GGDT.

The protein belongs to the phosphoglycerate kinase family. In terms of assembly, monomer.

It localises to the cytoplasm. It carries out the reaction (2R)-3-phosphoglycerate + ATP = (2R)-3-phospho-glyceroyl phosphate + ADP. It participates in carbohydrate degradation; glycolysis; pyruvate from D-glyceraldehyde 3-phosphate: step 2/5. The chain is Phosphoglycerate kinase (pgk) from Xanthobacter flavus.